A 256-amino-acid polypeptide reads, in one-letter code: 5'-nucleotidase SurE (256 aa).

Asp-8, Asp-9, Ser-39, and Asn-95 together coordinate a divalent metal cation.

The protein belongs to the SurE nucleotidase family. A divalent metal cation serves as cofactor.

It localises to the cytoplasm. The enzyme catalyses a ribonucleoside 5'-phosphate + H2O = a ribonucleoside + phosphate. In terms of biological role, nucleotidase that shows phosphatase activity on nucleoside 5'-monophosphates. The polypeptide is 5'-nucleotidase SurE (Methanosphaera stadtmanae (strain ATCC 43021 / DSM 3091 / JCM 11832 / MCB-3)).